A 121-amino-acid chain; its full sequence is MQSHFITTASILLVVIVAFCAAAPMIEEPKLEKPTNLEILFAKIVKKQNESKQHRLINFISRAMPGGVDAPIASMAEYETFKSDKSANFLSDGAGHVVFRQYRRARLSDILHNVNRRAGGV.

The helical transmembrane segment at 6-26 (ITTASILLVVIVAFCAAAPMI) threads the bilayer.

It is found in the membrane. This is an uncharacterized protein from Caenorhabditis elegans.